A 351-amino-acid polypeptide reads, in one-letter code: 1-acylglycerol-3-phosphate O-acyltransferase ABHD5 (351 aa).

One can recognise an AB hydrolase-1 domain in the interval 79 to 184; the sequence is PLVLLHGFGG…LILVEPWGFP (106 aa). A Phosphoserine modification is found at Ser124. Positions 329–334 match the HXXXXD motif motif; sequence HYVYAD.

It belongs to the peptidase S33 family. ABHD4/ABHD5 subfamily. Interacts with ADRP and PLIN. Interacts with PNPLA2. Interacts with PLIN5; promotes interaction with PNPLA2.

The protein localises to the cytoplasm. It is found in the lipid droplet. The catalysed reaction is a 1-acyl-sn-glycero-3-phosphate + an acyl-CoA = a 1,2-diacyl-sn-glycero-3-phosphate + CoA. The enzyme catalyses 1-(9Z-octadecenoyl)-sn-glycero-3-phosphate + (9Z)-octadecenoyl-CoA = 1,2-di-(9Z-octadecenoyl)-sn-glycero-3-phosphate + CoA. It catalyses the reaction 1-(9Z-octadecenoyl)-sn-glycero-3-phosphate + hexadecanoyl-CoA = 1-(9Z)-octadecenoyl-2-hexadecanoyl-sn-glycero-3-phosphate + CoA. It carries out the reaction 1-(9Z-octadecenoyl)-sn-glycero-3-phosphate + octadecanoyl-CoA = 1-(9Z-octadecenoyl)-2-octadecanoyl-sn-glycero-3-phosphate + CoA. The catalysed reaction is 1-(9Z-octadecenoyl)-sn-glycero-3-phosphate + (5Z,8Z,11Z,14Z)-eicosatetraenoyl-CoA = 1-(9Z)-octadecenoyl-2-(5Z,8Z,11Z,14Z)-eicosatetraenoyl-sn-glycero-3-phosphate + CoA. The enzyme catalyses eicosanoyl-CoA + 1-(9Z-octadecenoyl)-sn-glycero-3-phosphate = 1-(9Z)-octadecenoyl-2-eicosanoyl-sn-glycero-3-phosphate + CoA. It catalyses the reaction 1-hexadecanoyl-sn-glycero-3-phosphate + (9Z)-octadecenoyl-CoA = 1-hexadecanoyl-2-(9Z-octadecenoyl)-sn-glycero-3-phosphate + CoA. It carries out the reaction 1-octadecanoyl-sn-glycero-3-phosphate + (9Z)-octadecenoyl-CoA = 1-octadecanoyl-2-(9Z-octadecenoyl)-sn-glycero-3-phosphate + CoA. The catalysed reaction is 1-(5Z,8Z,11Z,14Z-eicosatetraenoyl)-sn-glycero-3-phosphate + (9Z)-octadecenoyl-CoA = 1-(5Z,8Z,11Z,14Z)-eicosatetraenoyl-2-(9Z)-octadecenoyl-sn-glycero-3-phosphate + CoA. Its activity is regulated as follows. Acyltransferase activity is inhibited by detergents such as Triton X-100 and 3-[(3-cholamidopropyl)dimethylammonio]-1-propanesulfonate (CHAPS). Acyltransferase activity is inhibited by the presence of magnesium and calcium. In terms of biological role, coenzyme A-dependent lysophosphatidic acid acyltransferase that catalyzes the transfer of an acyl group on a lysophosphatidic acid. Functions preferentially with 1-oleoyl-lysophosphatidic acid followed by 1-palmitoyl-lysophosphatidic acid, 1-stearoyl-lysophosphatidic acid and 1-arachidonoyl-lysophosphatidic acid as lipid acceptor. Functions preferentially with arachidonoyl-CoA followed by oleoyl-CoA as acyl group donors. Functions in phosphatidic acid biosynthesis. May regulate the cellular storage of triacylglycerol through activation of the phospholipase PNPLA2. Involved in keratinocyte differentiation. Regulates lipid droplet fusion. The polypeptide is 1-acylglycerol-3-phosphate O-acyltransferase ABHD5 (Rattus norvegicus (Rat)).